The chain runs to 327 residues: Undecaprenyl-phosphate 4-deoxy-4-formamido-L-arabinose transferase (327 aa).

At 1–235 (MFDAAPIKKV…TCLTTTPLRL (235 aa)) the chain is on the cytoplasmic side. A helical transmembrane segment spans residues 236 to 256 (LSLLGSVIAIGGFSLSVLLIV). Residues 257-269 (LRLALGPQWAAEG) are Periplasmic-facing. Residues 270-290 (VFMLFAVLFTFIGAQFIGMGL) traverse the membrane as a helical segment. Residues 291–327 (LGEYIGRIYNDVRARPRYFVQQVIYPESTSFTEESHQ) are Cytoplasmic-facing.

The protein belongs to the glycosyltransferase 2 family.

The protein localises to the cell inner membrane. It carries out the reaction UDP-4-deoxy-4-formamido-beta-L-arabinose + di-trans,octa-cis-undecaprenyl phosphate = 4-deoxy-4-formamido-alpha-L-arabinopyranosyl di-trans,octa-cis-undecaprenyl phosphate + UDP. The protein operates within glycolipid biosynthesis; 4-amino-4-deoxy-alpha-L-arabinose undecaprenyl phosphate biosynthesis; 4-amino-4-deoxy-alpha-L-arabinose undecaprenyl phosphate from UDP-4-deoxy-4-formamido-beta-L-arabinose and undecaprenyl phosphate: step 1/2. It functions in the pathway bacterial outer membrane biogenesis; lipopolysaccharide biosynthesis. Its function is as follows. Catalyzes the transfer of 4-deoxy-4-formamido-L-arabinose from UDP to undecaprenyl phosphate. The modified arabinose is attached to lipid A and is required for resistance to polymyxin and cationic antimicrobial peptides. This is Undecaprenyl-phosphate 4-deoxy-4-formamido-L-arabinose transferase from Salmonella paratyphi A (strain ATCC 9150 / SARB42).